Reading from the N-terminus, the 485-residue chain is GlcNAc-binding protein A (485 aa).

An N-terminal signal peptide occupies residues 1-29 (MKKQPQKTLLAIALSVVSGTAMSHGYVSA). Positions 30–200 (VENGVAEARV…SFYNVIDVKF (171 aa)) constitute a Chitin-binding type-4 domain. Residues 437–478 (AGTKVLASDGAIYQCKPFPYSGYCVQWTPTATQYQPGTGSHW) form the Chitin-binding type-3 domain.

It belongs to the GbpA family.

The protein resides in the secreted. Functionally, probably interacts with GlcNAc residues. May promote attachment to both epithelial cell surfaces and chitin. This chain is GlcNAc-binding protein A, found in Vibrio vulnificus (strain YJ016).